We begin with the raw amino-acid sequence, 198 residues long: Glycerol-3-phosphate acyltransferase 2 (198 aa).

A run of 4 helical transmembrane segments spans residues 4–24 (TYLL…LVVG), 71–91 (LPII…AVLG), 113–133 (LLCY…SLLF), and 147–167 (VVAV…AMCL).

This sequence belongs to the PlsY family. Probably interacts with PlsX.

Its subcellular location is the cell membrane. It carries out the reaction an acyl phosphate + sn-glycerol 3-phosphate = a 1-acyl-sn-glycero-3-phosphate + phosphate. It participates in lipid metabolism; phospholipid metabolism. Functionally, catalyzes the transfer of an acyl group from acyl-phosphate (acyl-PO(4)) to glycerol-3-phosphate (G3P) to form lysophosphatidic acid (LPA). This enzyme utilizes acyl-phosphate as fatty acyl donor, but not acyl-CoA or acyl-ACP. This Bacillus cereus (strain ATCC 10987 / NRS 248) protein is Glycerol-3-phosphate acyltransferase 2.